Here is a 445-residue protein sequence, read N- to C-terminus: Tubby-like F-box protein 10 (445 aa).

The F-box domain occupies 57–112; it reads SRWANLPPELLFDVIKRLEESESNWPARKHVVACASVCRSWRAMCQEIVLGPEICG. The span at 382–398 shows a compositional bias: low complexity; it reads PQPQGTGAAAAPTSAPA. The tract at residues 382–401 is disordered; it reads PQPQGTGAAAAPTSAPAHPE.

Belongs to the TUB family. In terms of assembly, part of a SCF (ASK-cullin-F-box) protein ligase complex. Interacts with SKP1A/ASK1. Ubiquitous.

The protein resides in the nucleus. The protein operates within protein modification; protein ubiquitination. Component of SCF(ASK-cullin-F-box) E3 ubiquitin ligase complexes, which may mediate the ubiquitination and subsequent proteasomal degradation of target proteins. The chain is Tubby-like F-box protein 10 from Arabidopsis thaliana (Mouse-ear cress).